The sequence spans 402 residues: Mannonate dehydratase (402 aa).

This sequence belongs to the mannonate dehydratase family. The cofactor is Fe(2+). It depends on Mn(2+) as a cofactor.

The catalysed reaction is D-mannonate = 2-dehydro-3-deoxy-D-gluconate + H2O. The protein operates within carbohydrate metabolism; pentose and glucuronate interconversion. Functionally, catalyzes the dehydration of D-mannonate. This is Mannonate dehydratase from Rhizobium meliloti (strain 1021) (Ensifer meliloti).